The chain runs to 1408 residues: Transcription elongation factor SPT6 (1408 aa).

A disordered region spans residues 1–199; the sequence is MSNSMRDLIS…DAEVARPRDR (199 aa). Composition is skewed to acidic residues over residues 13–24, 39–51, 61–75, and 95–104; these read AELDDEEEDESF, DSSE…DDEE, IVDE…GESD, and AQLDEDDLDL. Residues 127 to 141 show a composition bias toward basic and acidic residues; that stretch reads GTRDEDRGNQRRGLD. Positions 168–184 are enriched in acidic residues; sequence EFDDFIEEDFPDDPEEL. Basic and acidic residues predominate over residues 185-199; the sequence is EQQREDAEVARPRDR. Residues 1101 to 1168 enclose the S1 motif domain; it reads GMIVPVNVRV…KDFMAKLSMR (68 aa). In terms of domain architecture, SH2 spans 1213-1314; sequence VKHPNFKPFN…RKVEELMRHD (102 aa).

It belongs to the SPT6 family.

It localises to the nucleus. The protein localises to the chromosome. Functionally, histone H3-H4 chaperone that plays a role in maintenance of chromatin structure during RNA polymerase II transcription elongation thereby repressing transcription initiation from cryptic promoters. Mediates the reassembly of nucleosomes onto the promoters of at least a selected set of genes during repression; the nucleosome reassembly is essential for transcriptional repression. Essential for viability. In Gibberella zeae (strain ATCC MYA-4620 / CBS 123657 / FGSC 9075 / NRRL 31084 / PH-1) (Wheat head blight fungus), this protein is Transcription elongation factor SPT6 (SPT6).